Consider the following 579-residue polypeptide: F-box protein At5g39450 (579 aa).

One can recognise an F-box domain in the interval 16–62 (TCLLLSLPEDVIAVIARFVSPRDICNLSLCCKSLCDVVDSERIWLVQ).

In Arabidopsis thaliana (Mouse-ear cress), this protein is F-box protein At5g39450.